The chain runs to 449 residues: MSHKACYTNPGAGVKRPRNDTGNKLTVVLGAQWGDEGKGKVVDLLATESDIICRCQGGNNAGHTVVVDGKEYDFHLLPSGIINSKALSVIGNGVVIHLPGLFEEAEKNEKNGLKDWEKRLIISDRAHIVFDFHQAVDGLQEVQRQAQEGKNIGTTKKGIGPTYSSKASRTGLRICDLLADFKDFSMRFKNLAQQYQAMFPTLEVDVDGQLKKLKEYAERIRPMVRDGVYFMYDAINGPPKKILVEGANAALLDIDFGTYPFVTSSNCTVGGVCTGLGIPPLNIGDVYGVVKAYTTRVGIGAFPTEQLNEVGELLQTRGHEVGVTTGRKRRCGWLDLVILRYANMINGFTAFALTKLDILDVMDEIKVGVSYKLNGKKIPYFPANMDVLQKVEVEYEKLPGWKSDTSACRKWEDLPVKAQNYIRFVEIHVGVPIKWVGVGKARESMIQMF.

GTP contacts are provided by residues 34–40 (GDEGKGK) and 62–64 (GHT). Asp-35 functions as the Proton acceptor in the catalytic mechanism. Positions 35 and 62 each coordinate Mg(2+). Asp-35 lines the substrate pocket. IMP-binding positions include 35–38 (DEGK), 60–63 (NAGH), Thr-155, Arg-169, Asn-248, Thr-263, and Arg-327. Residue His-63 is the Proton donor of the active site. 323 to 329 (VTTGRKR) is a substrate binding site. Residues Arg-329, 355 to 357 (KLD), and 437 to 440 (GVGK) contribute to the GTP site.

It belongs to the adenylosuccinate synthetase family. As to quaternary structure, homodimer. It depends on Mg(2+) as a cofactor.

The protein resides in the cytoplasm. It carries out the reaction IMP + L-aspartate + GTP = N(6)-(1,2-dicarboxyethyl)-AMP + GDP + phosphate + 2 H(+). The protein operates within purine metabolism; AMP biosynthesis via de novo pathway; AMP from IMP: step 1/2. Component of the purine nucleotide cycle (PNC), which interconverts IMP and AMP to regulate the nucleotide levels in various tissues, and which contributes to glycolysis and ammoniagenesis. Catalyzes the first committed step in the biosynthesis of AMP from IMP. The polypeptide is Adenylosuccinate synthetase isozyme 1 B (adss1b) (Salmo salar (Atlantic salmon)).